An 802-amino-acid chain; its full sequence is MARLFSLKPLVLALGLCFGTHCAAADAVAAEETDNPTAGESVRSVSEPIQPTSLSLGSTCLFCSNESGSPERTEAAVQGSGEASIPEDYTRIVADRMEGQSQVQVRAEGNVVVERNRTTLNTDWADYDQSGDTVTAGDRFALQQDGTLIRGETLTYNLEQQTGEAHNVRMEIEQGGRRLQSVSRTAEMLGEGHYKLTETQFNTCSAGDAGWYVKAASVEADREKGIGVAKHAAFVFGGVPIFYTPWADFPLDGNRKSGLLVPSLSAGSDGVSLSVPYYFNLAPNLDATFAPSVIGERGAVFDGQVRYLRPDYAGQSDLTWLPHDKKSGRNNRYQAKWQHRHDISDTLQAGVDFNQVSDSGYYRDFYGNKEIAGNVNLNRRVWLDYGGRAAGGSLNAGLSVLKYQTLANQSGYKDKPYALMPRLSVEWRKNTGRAQIGVSAQFTRFSHDSRQDGSRLVVYPDIKWDFSNSWGYVRPKLGLHATYYSLNRFGSQEARRVSRTLPIVNIDSGATFERNTRMFGGEVLQTLEPRLFYNYIPAKSQNDLPNFDSSESSFGYGQLFRENLYYGNDRINTANSLSAAVQSRILDGATGEERFRAGIGQKFYFKDDAVMLDGSVGKKPRNRSDWVAFASGSIGSRFILDSSIHYNQNDKRAENYAVGASYRPAQGKVLNARYKYGRNEKIYLKSDGSYFYDKLSQLDLSAQWPLTRNLSAVVRYNYGFEAKKPIEVLAGAEYKSSCGCWGAGVYAQRYVTGENTYKNAVFFSLQLKDLSSVGRNPADRMDVAVPGYITAHSLSAGRNKRP.

The signal sequence occupies residues 1-25 (MARLFSLKPLVLALGLCFGTHCAAA).

The protein belongs to the LptD family. As to quaternary structure, component of the lipopolysaccharide transport and assembly complex. Interacts with LptE and LptA.

The protein resides in the cell outer membrane. Its function is as follows. Together with LptE, is involved in the assembly of lipopolysaccharide (LPS) at the surface of the outer membrane. In Neisseria meningitidis serogroup B (strain ATCC BAA-335 / MC58), this protein is LPS-assembly protein LptD.